The chain runs to 163 residues: Bacterial ISG15-like ubiquitin-like protein BilA (163 aa).

Ubiquitin-like BIL-type domains lie at 4–80 (LVVF…RCKR) and 81–163 (IRAT…RIEG). Gly-163 is covalently cross-linked (Glycyl lysine isopeptide (Gly-Lys) (interchain with K-? in central tail fiber acceptor protein)).

In terms of biological role, component of the Bil (bacterial ISG15-like) antiviral defense system, composed of BilA, BilB, BilC and BilD. The Bil system specifically conjugates a ubiquitin-like moiety (bilA) to the bacteriophage central tail fiber (CTF, or tip attachment protein J) via reactions involving E1 (bilD) and E2 (bilB). Modifies CTF of phage SECphi27 and SECphi4, which probably interferes with assembly of the phage tail. Also modifies T5 baseplate hub protein pb3 (gene D16), but not gp27 of phage T6 (Bil defends against T6). Bil-encoding bacteria produce mostly defective phage SECphi27, many of which have phage assembly defects, including no tails. SECphi27 phage progeny produced in E.coli with the Bil system inject less DNA into naive host cells, maybe because the phage are less able to adsorb and inject their DNA into host cells. Functionally, expression of the Bil system in E.coli (strain MG1655) confers about 100-fold resistance to phage SECphi27, SECphi18, SECphi6, SECphi4 and T5, but not to SECphi17. When cells expressing the Bil system are infected by phage SECphi27 at low multiplicity of infection (0.03 MOI) the culture survives, at 3.0 MOI the culture collapses at the same time as cells without the Bil system. This Collimonas sp. (strain OK412) protein is Bacterial ISG15-like ubiquitin-like protein BilA.